The primary structure comprises 162 residues: Transmembrane protein 92 (162 aa).

A signal peptide spans 1 to 22 (MLDTWVWGTLTLTFGLLSSLQG). Residues 23-63 (VSFNETANTCDILNCPKGFTCCVKECCPERKVWDPANDRFR) are Extracellular-facing. A helical membrane pass occupies residues 64-84 (FLVILACIIFPILFICALVSL). Over 85–162 (FCPNCTELQH…QMRGRAYATL (78 aa)) the chain is Cytoplasmic. Residues 134–162 (TPPTEPPPPYSLRPEGPAGQMRGRAYATL) are disordered.

The protein localises to the membrane. This is Transmembrane protein 92 (Tmem92) from Mus musculus (Mouse).